Reading from the N-terminus, the 362-residue chain is NAD(P)H-quinone oxidoreductase subunit 1, chloroplastic (362 aa).

8 helical membrane passes run 29–49 (ILPI…IVWL), 103–123 (IAVI…HFVL), 128–148 (IGVF…LMAG), 164–184 (AAQS…ISLL), 202–222 (FFGW…ISSL), 247–267 (YSGI…LVSS), 303–323 (TMGI…SITI), and 335–355 (LLNL…LLTT).

It belongs to the complex I subunit 1 family. As to quaternary structure, NDH is composed of at least 16 different subunits, 5 of which are encoded in the nucleus.

Its subcellular location is the plastid. It is found in the chloroplast thylakoid membrane. It carries out the reaction a plastoquinone + NADH + (n+1) H(+)(in) = a plastoquinol + NAD(+) + n H(+)(out). The catalysed reaction is a plastoquinone + NADPH + (n+1) H(+)(in) = a plastoquinol + NADP(+) + n H(+)(out). Functionally, NDH shuttles electrons from NAD(P)H:plastoquinone, via FMN and iron-sulfur (Fe-S) centers, to quinones in the photosynthetic chain and possibly in a chloroplast respiratory chain. The immediate electron acceptor for the enzyme in this species is believed to be plastoquinone. Couples the redox reaction to proton translocation, and thus conserves the redox energy in a proton gradient. This chain is NAD(P)H-quinone oxidoreductase subunit 1, chloroplastic, found in Triticum aestivum (Wheat).